A 165-amino-acid polypeptide reads, in one-letter code: Phosphopantetheine adenylyltransferase (165 aa).

Thr9 lines the substrate pocket. Residues 9 to 10 (TF) and His17 contribute to the ATP site. Substrate is bound by residues Lys41, Leu73, and Arg87. ATP is bound by residues 88-90 (GLR), Glu98, and 123-129 (YMFISAT).

Belongs to the bacterial CoaD family. In terms of assembly, homohexamer. It depends on Mg(2+) as a cofactor.

It localises to the cytoplasm. The catalysed reaction is (R)-4'-phosphopantetheine + ATP + H(+) = 3'-dephospho-CoA + diphosphate. It functions in the pathway cofactor biosynthesis; coenzyme A biosynthesis; CoA from (R)-pantothenate: step 4/5. Its function is as follows. Reversibly transfers an adenylyl group from ATP to 4'-phosphopantetheine, yielding dephospho-CoA (dPCoA) and pyrophosphate. This is Phosphopantetheine adenylyltransferase from Nitrosospira multiformis (strain ATCC 25196 / NCIMB 11849 / C 71).